The chain runs to 563 residues: NAD(P)H-quinone oxidoreductase chain 4 (563 aa).

Transmembrane regions (helical) follow at residues 25 to 45 (FPWL…VPFI), 56 to 76 (WFAL…YLYG), 90 to 110 (VSWL…ISMP), 111 to 131 (LILL…PVTF), 133 to 153 (PKLF…VFAV), 157 to 177 (LLFF…LAIW), 189 to 209 (FIIY…AMGF), 230 to 250 (GFQL…LPIV), 264 to 284 (TAPV…YALM), 298 to 318 (FAPL…LTSF), 335 to 355 (MGFV…GAML), 356 to 376 (QMIS…ATYD), 397 to 417 (FALW…SGFV), 438 to 458 (IVIA…LLSM), and 485 to 505 (VYII…PRLM).

Belongs to the complex I subunit 4 family.

The protein localises to the cellular thylakoid membrane. It catalyses the reaction a plastoquinone + NADH + (n+1) H(+)(in) = a plastoquinol + NAD(+) + n H(+)(out). The catalysed reaction is a plastoquinone + NADPH + (n+1) H(+)(in) = a plastoquinol + NADP(+) + n H(+)(out). NDH-1 shuttles electrons from NAD(P)H, via FMN and iron-sulfur (Fe-S) centers, to quinones in the respiratory chain. The immediate electron acceptor for the enzyme in this species is believed to be plastoquinone. Couples the redox reaction to proton translocation (for every two electrons transferred, four hydrogen ions are translocated across the cytoplasmic membrane), and thus conserves the redox energy in a proton gradient. This is NAD(P)H-quinone oxidoreductase chain 4 from Prochlorococcus marinus (strain MIT 9313).